The sequence spans 424 residues: CinA-like protein (424 aa).

The protein belongs to the CinA family.

The protein is CinA-like protein of Shewanella pealeana (strain ATCC 700345 / ANG-SQ1).